The primary structure comprises 866 residues: Autophagy-related protein 9 (866 aa).

At 1 to 94 (MMSSGHKGPN…KGLWCIIVKW (94 aa)) the chain is on the cytoplasmic side. The chain crosses the membrane as a helical span at residues 95–115 (AVELLSLGFIICFSGFFLLYV). Residues 116-153 (DWNGLQNAKCGMDAVESGTKPCDLVKEAIHPHPLSPFT) lie on the Lumenal side of the membrane. A helical transmembrane segment spans residues 154-174 (LTTAIIVGYLALFSVYWLFCF). Residues 175–319 (LRFFAQLKDT…VSNPTTLKKR (145 aa)) are Cytoplasmic-facing. The stretch at 320–340 (LFVVGLAMLLLSPFLVIFMLV) is an intramembrane region. At 341–404 (YLFLRHAEQF…LKQFPSPIIS (64 aa)) the chain is on the cytoplasmic side. Residues 405–425 (IIAKFVSFVSGGFAAVLIIIA) traverse the membrane as a helical segment. Residues 426–433 (FLEESLLE) lie on the Lumenal side of the membrane. Residues 434 to 454 (GHIFGRNLFWYAAVFGTITAI) traverse the membrane as a helical segment. At 455–507 (SRAAISDELLVLDPVGTMSLVVQNTHYMPKRWRGKENKDDVRLELETLFQYTG) the chain is on the cytoplasmic side. An intramembrane segment occupies 508-528 (MMLLEEIASIFITPFLLMFVV). Over 529–866 (PKRVDDILQF…ETSTSSTTLR (338 aa)) the chain is Cytoplasmic. A disordered region spans residues 744–781 (QPEGEDSYGSQHPLDGRNQWWGRGNHSQISTAHPATTN). Positions 768-781 (NHSQISTAHPATTN) are enriched in polar residues.

Belongs to the ATG9 family. In terms of assembly, homotrimer; forms a homotrimer with a central pore that forms a path between the two membrane leaflets. Expressed in roots, leaves, stems and flowers.

Its subcellular location is the preautophagosomal structure membrane. Functionally, phospholipid scramblase involved in autophagy by mediating autophagosomal membrane expansion. Cycles between the preautophagosomal structure/phagophore assembly site (PAS) and the cytoplasmic vesicle pool and supplies membrane for the growing autophagosome. Lipid scramblase activity plays a key role in preautophagosomal structure/phagophore assembly by distributing the phospholipids that arrive through ATG2 from the cytoplasmic to the luminal leaflet of the bilayer, thereby driving autophagosomal membrane expansion. In addition to autophagy, also plays a role in necrotic cell death. Plays an essential role in plant nutrient recycling. The sequence is that of Autophagy-related protein 9 from Arabidopsis thaliana (Mouse-ear cress).